The following is a 300-amino-acid chain: UDP-N-acetylenolpyruvoylglucosamine reductase (300 aa).

The FAD-binding PCMH-type domain occupies 28–193 (KTGGPADWLA…LDATFALKLG (166 aa)). Arg-172 is a catalytic residue. Catalysis depends on Ser-222, which acts as the Proton donor. Glu-292 is an active-site residue.

Belongs to the MurB family. FAD serves as cofactor.

The protein localises to the cytoplasm. It carries out the reaction UDP-N-acetyl-alpha-D-muramate + NADP(+) = UDP-N-acetyl-3-O-(1-carboxyvinyl)-alpha-D-glucosamine + NADPH + H(+). Its pathway is cell wall biogenesis; peptidoglycan biosynthesis. Cell wall formation. The protein is UDP-N-acetylenolpyruvoylglucosamine reductase of Limosilactobacillus fermentum (strain NBRC 3956 / LMG 18251) (Lactobacillus fermentum).